Reading from the N-terminus, the 131-residue chain is uncharacterized protein (131 aa).

The interval 112-131 is disordered; it reads LTDNPGAVRKSQKSLIPPYN.

This is an uncharacterized protein from Fowl adenovirus A serotype 1 (strain CELO / Phelps) (FAdV-1).